A 601-amino-acid polypeptide reads, in one-letter code: Protein NRT1/ PTR FAMILY 4.4 (601 aa).

Transmembrane regions (helical) follow at residues 44 to 64 (AALF…AVGN) and 82 to 102 (ANLV…GGFL). At threonine 112 the chain carries Phosphothreonine. Helical transmembrane passes span 113 to 133 (MLVF…QAHL), 160 to 180 (TLYT…PNII), 198 to 218 (FFNA…TLLV), 228 to 248 (VGFG…VAGT), 337 to 357 (ILLS…ILAQ), 386 to 406 (AIPY…FVPL), 420 to 440 (LQRI…AALV), 453 to 473 (VMLS…SEMF), 493 to 513 (FLTA…SVLV), and 544 to 564 (HFYW…LFWS).

This sequence belongs to the major facilitator superfamily. Proton-dependent oligopeptide transporter (POT/PTR) (TC 2.A.17) family. In terms of tissue distribution, expressed in shoots, roots and stems.

It is found in the membrane. The chain is Protein NRT1/ PTR FAMILY 4.4 (NPF4.4) from Arabidopsis thaliana (Mouse-ear cress).